A 117-amino-acid polypeptide reads, in one-letter code: DNA polymerase epsilon subunit 4 (117 aa).

The tract at residues 1–36 (MAAAAAAGSGTPREEEGPAGEAAASQPQAPTSVPGA) is disordered. Position 2 is an N-acetylalanine (Ala-2). The residue at position 11 (Thr-11) is a Phosphothreonine. Over residues 19–30 (AGEAAASQPQAP) the composition is skewed to low complexity. The residue at position 25 (Ser-25) is a Phosphoserine.

In terms of assembly, component of the DNA polymerase epsilon complex consisting of four subunits: the catalytic subunit POLE and the accessory subunits POLE2, POLE3 and POLE4. Interaction with POLE3 is a prerequisite for further binding with POLE and POLE2.

The protein localises to the nucleus. Accessory component of the DNA polymerase epsilon complex. Participates in DNA repair and in chromosomal DNA replication. The protein is DNA polymerase epsilon subunit 4 (POLE4) of Homo sapiens (Human).